Here is a 302-residue protein sequence, read N- to C-terminus: Meiotically up-regulated gene 129 protein (302 aa).

Has a role in meiosis. The polypeptide is Meiotically up-regulated gene 129 protein (mug129) (Schizosaccharomyces pombe (strain 972 / ATCC 24843) (Fission yeast)).